Consider the following 362-residue polypeptide: Protein RecA (362 aa).

65–72 is a binding site for ATP; that stretch reads GPESSGKT. The tract at residues 323–362 is disordered; the sequence is RVANGMEPLNEKSTKETADDKASGKTGENKQETIEEASKE. The span at 331-362 shows a compositional bias: basic and acidic residues; that stretch reads LNEKSTKETADDKASGKTGENKQETIEEASKE.

This sequence belongs to the RecA family.

Its subcellular location is the cytoplasm. Functionally, can catalyze the hydrolysis of ATP in the presence of single-stranded DNA, the ATP-dependent uptake of single-stranded DNA by duplex DNA, and the ATP-dependent hybridization of homologous single-stranded DNAs. It interacts with LexA causing its activation and leading to its autocatalytic cleavage. The sequence is that of Protein RecA from Limosilactobacillus reuteri (strain DSM 20016) (Lactobacillus reuteri).